The sequence spans 60 residues: Large ribosomal subunit protein uL30 (60 aa).

This sequence belongs to the universal ribosomal protein uL30 family. As to quaternary structure, part of the 50S ribosomal subunit.

The protein is Large ribosomal subunit protein uL30 of Carboxydothermus hydrogenoformans (strain ATCC BAA-161 / DSM 6008 / Z-2901).